An 826-amino-acid chain; its full sequence is MEVLLRSISSFLNLSSSKHIDLDPFEKYYKRVEELLRVLKPIADVVVTSDFVFDEKLGKAFEELTQDVDQSIDLFRSWQAFSSKVYFVLQIESLLPKMRDTIVDTFQFLMSSKNHLPDELSPASLEQCLEKIKHLSYEEISSVIDGALRDQRDGVGPSPEILVKIGENTGLRSNQEILIEAVALERQKEMAEQSENNAEVEFLDQLIVIVNRMHERLLLIKQTQTSSVAILADFFCPLSLEVMTDPVIVSSGQTYEKAFIKRWIDLGLKVCPKTRQTLTHTTLIPNYTVKALIANWCETNDVKLPDPNKSTSLNELSPLLSCTDSIPSTGADVSARKVSNKSHDWDASSSETGKPSFSSRATEREGASPSRPASALGASSPGISGNGYGLDARRGSLNDFEDRSNDSRELRTDAPGRSSVSSTTRGSVENGQTSENHHHRSPSATSTVSNEEFPRADANENSEESAHATPYSSDASGEIRSGPLAATTSAATRRDLSDFSPKFMDRRTRGQFWRRPSERLGSRIVSAPSNETRRDLSEVETQVKKLVEELKSSSLDTQRQATAELRLLAKHNMDNRIVIGNSGAIVLLVELLYSTDSATQENAVTALLNLSINDNNKKAIADAGAIEPLIHVLENGSSEAKENSAATLFSLSVIEENKIKIGQSGAIGPLVDLLGNGTPRGKKDAATALFNLSIHQENKAMIVQSGAVRYLIDLMDPAAGMVDKAVAVLANLATIPEGRNAIGQEGGIPLLVEVVELGSARGKENAAAALLQLSTNSGRFCNMVLQEGAVPPLVALSQSGTPRAREKAQALLSYFRNQRHGNAGRG.

A coiled-coil region spans residues 172–204; sequence RSNQEILIEAVALERQKEMAEQSENNAEVEFLD. Residues 229-303 form the U-box domain; the sequence is AILADFFCPL…ANWCETNDVK (75 aa). Positions 330–501 are disordered; the sequence is GADVSARKVS…TRRDLSDFSP (172 aa). Positions 347–360 are enriched in polar residues; that stretch reads ASSSETGKPSFSSR. Over residues 391–414 the composition is skewed to basic and acidic residues; sequence DARRGSLNDFEDRSNDSRELRTDA. Ser396 bears the Phosphoserine mark. Over residues 416-428 the composition is skewed to low complexity; sequence GRSSVSSTTRGSV. Over residues 492–501 the composition is skewed to basic and acidic residues; the sequence is TRRDLSDFSP. ARM repeat units follow at residues 530–570, 573–612, 614–653, 655–694, 696–734, 736–775, and 778–817; these read NETR…LLAK, MDNR…NLSI, DNNK…SLSV, EENK…NLSI, QENK…NLAT, PEGR…QLST, and GRFC…YFRN.

The catalysed reaction is S-ubiquitinyl-[E2 ubiquitin-conjugating enzyme]-L-cysteine + [acceptor protein]-L-lysine = [E2 ubiquitin-conjugating enzyme]-L-cysteine + N(6)-ubiquitinyl-[acceptor protein]-L-lysine.. The protein operates within protein modification; protein ubiquitination. In terms of biological role, functions as an E3 ubiquitin ligase. This chain is U-box domain-containing protein 4 (PUB4), found in Arabidopsis thaliana (Mouse-ear cress).